Consider the following 723-residue polypeptide: Tripartite motif-containing protein 42 (723 aa).

The RING-type zinc finger occupies 146–192 (CPMCSRLRLHSFMLPCNHSLCEKCLRQLQKHAEVTENFFILICPVCD). 2 B box-type zinc fingers span residues 235 to 280 (PILC…FVDT) and 285 to 326 (QDEK…TISL). Cysteine 290, histidine 293, cysteine 313, and histidine 318 together coordinate Zn(2+). A coiled-coil region spans residues 382 to 407 (KLRSILQEKEKIIMEQIENLEVSRQK). Residues 434-492 (LKETGQVAFLQSAKILVDQIEDGIQTTYRPDPQLRLHSINYVPLDFVELSSAIHELFPT) enclose the COS domain. The Fibronectin type-III domain maps to 603–701 (TPGPIVIYQT…DICKVVTPDG (99 aa)).

Belongs to the TRIM/RBCC family.

The chain is Tripartite motif-containing protein 42 (TRIM42) from Homo sapiens (Human).